Reading from the N-terminus, the 343-residue chain is 4-hydroxyproline 2-epimerase 1 (343 aa).

Ser90 acts as the Proton acceptor in catalysis. Substrate contacts are provided by residues 91-92 (GS), Asp251, and 256-257 (GT).

This sequence belongs to the proline racemase family.

The catalysed reaction is trans-4-hydroxy-L-proline = cis-4-hydroxy-D-proline. Functionally, catalyzes the epimerization of trans-4-hydroxy-L-proline (t4LHyp) to cis-4-hydroxy-D-proline (c4DHyp) in vitro, albeit with low efficiency. The physiological substrate may be different. Displays no proline racemase activity. The protein is 4-hydroxyproline 2-epimerase 1 of Brucella anthropi (strain ATCC 49188 / DSM 6882 / CCUG 24695 / JCM 21032 / LMG 3331 / NBRC 15819 / NCTC 12168 / Alc 37) (Ochrobactrum anthropi).